The following is a 121-amino-acid chain: Non-structural protein 3a (121 aa).

Positions 1 to 39 (MMSMRSRRSMFIEHFNELMMRVQRPPTLLLILLVANAFS) are cleaved as a signal peptide.

The sequence is that of Non-structural protein 3a from Bat coronavirus HKU5 (BtCoV).